The primary structure comprises 673 residues: UvrABC system protein B (673 aa).

The Helicase ATP-binding domain maps to 26 to 415; the sequence is EGLEDGLAHQ…GDVVDQVVRP (390 aa). Residue 39–46 coordinates ATP; that stretch reads GVTGSGKT. Residues 92–115 carry the Beta-hairpin motif; it reads YYDYYQPEAYVPSSDTFIEKDASV. Positions 431-597 constitute a Helicase C-terminal domain; it reads QVDDLLSEIR…GLNKKVVDIL (167 aa). The tract at residues 608–627 is disordered; the sequence is AKGRGKSRPIVEPDNVPMDM. The region spanning 633–668 is the UVR domain; it reads QQKIHELEGLMMQHAQNLEFEEAAQIRDQLHQLREL.

It belongs to the UvrB family. As to quaternary structure, forms a heterotetramer with UvrA during the search for lesions. Interacts with UvrC in an incision complex.

The protein resides in the cytoplasm. In terms of biological role, the UvrABC repair system catalyzes the recognition and processing of DNA lesions. A damage recognition complex composed of 2 UvrA and 2 UvrB subunits scans DNA for abnormalities. Upon binding of the UvrA(2)B(2) complex to a putative damaged site, the DNA wraps around one UvrB monomer. DNA wrap is dependent on ATP binding by UvrB and probably causes local melting of the DNA helix, facilitating insertion of UvrB beta-hairpin between the DNA strands. Then UvrB probes one DNA strand for the presence of a lesion. If a lesion is found the UvrA subunits dissociate and the UvrB-DNA preincision complex is formed. This complex is subsequently bound by UvrC and the second UvrB is released. If no lesion is found, the DNA wraps around the other UvrB subunit that will check the other stand for damage. The sequence is that of UvrABC system protein B from Escherichia coli O6:H1 (strain CFT073 / ATCC 700928 / UPEC).